Reading from the N-terminus, the 687-residue chain is MEELVGLREGFSGDPVTLQELWGPCPHIRRAIQGGLEWLKQKVFRLGEDWYFLMTLGVLMALVSYAMNFAIGCVVRAHQWLYREIGDSHLLRYLSWTVYPVALVSFSSGFSQSITPSSGGSGIPELKTMLAGVILEDYLDIKNFGAKVVGLSCTLATGSTLFLGKVGPFVHLSVMIAAYLGRVRTTTIGEPENKSKQNEMLVAAAAVGVATVFAAPFSGVLFSIEVMSSHFSVRDYWRGFFAATCGAFIFRLLAVFNSEQETITSLYKTSFRVDVPFDLPEIFFFVALGGICGVLSCAYLFCQRTFLSFIKTNRYSSKLLATSKPVYSALATLLLASITYPPGVGHFLASRLSMKQHLDSLFDNHSWALMTQNSSPPWPEELDPQHLWWEWYHPRFTIFGTLAFFLVMKFWMLILATTIPMPAGYFMPIFILGAAIGRLLGEALAVAFPEGIVTGGVTNPIMPGGYALAGAAAFSGAVTHTISTALLAFELTGQIVHALPVLMAVLAANAIAQSCQPSFYDGTIIVKKLPYLPRILGRNIGSHHVRVEHFMNHSITTLAKDTPLEEVVKVVTSTDVTEYPLVESTESQILVGIVQRAQLVQALQAEPPSRAPGHQQCLQDILARGCPTEPVTLTLFSETTLHQAQNLFKLLNLQSLFVTSRGRAVGCVSWVEMKKAISNLTNPPAPK.

4 helical membrane passes run 52–72 (FLMT…FAIG), 161–181 (LFLG…AYLG), 202–222 (VAAA…GVLF), and 236–256 (YWRG…LAVF). Ca(2+) is bound by residues E259, E261, D278, and E281. Transmembrane regions (helical) follow at residues 282-302 (IFFF…YLFC), 329-349 (ALAT…HFLA), 396-416 (FTIF…LILA), 417-437 (TTIP…AAIG), 452-472 (IVTG…AGAA), and 486-506 (LLAF…MAVL). At 507–687 (AANAIAQSCQ…SNLTNPPAPK (181 aa)) the chain is on the cytoplasmic side. CBS domains follow at residues 551-609 (MNHS…EPPS) and 626-684 (CPTE…TNPP).

The protein belongs to the chloride channel (TC 2.A.49) family. CLCNKA subfamily. As to quaternary structure, homodimer. Interacts with BSND.

Its subcellular location is the basolateral cell membrane. It catalyses the reaction chloride(in) = chloride(out). It carries out the reaction bromide(in) = bromide(out). The catalysed reaction is nitrate(in) = nitrate(out). The enzyme catalyses iodide(out) = iodide(in). With respect to regulation, activated by extracellular Ca(2+) and inhibited by extracellular acidic pH. Its function is as follows. Anion-selective channel permeable to small monovalent anions with ion selectivity for chloride &gt; bromide &gt; nitrate &gt; iodide. Forms a homodimeric channel where each subunit has its own ion conduction pathway. May conduct double-barreled currents controlled by two types of gates, two fast gates that control each subunit independently and a slow common gate that opens and shuts off both subunits simultaneously. Assembles with the regulatory subunit BSND/Barttin for sorting at the basolateral plasma membrane domain and functional switch to the ion conducting state. CLCNKA:BSND channels display mostly a linear current-voltage relationship with fast gating at negative potentials. Mediates transepithelial chloride transport from the lumen to interstitial compartment along the thin ascending limb of Henle's loop, contributing to generation of hypertonic medullary interstitium as a countercurrent system to achieve urine concentration. Conducts chloride currents in the stria vascularis of the inner ear to establish the endocochlear potential necessary for normal hearing. The chain is Chloride channel protein ClC-Ka from Homo sapiens (Human).